Here is a 154-residue protein sequence, read N- to C-terminus: MVKEAVKIVAQNKKARHDYFIEETIEAGIVLSGTEVKSVRQGKLNLKESYASIVEGEVIVSGMHISPYEQGNIFNKDPLRDRKLLLHKSEINRLIGLTQQKGYTLVPVQAYLKRGMVKIELGVARGKKLYDKRDDIAARDAKREIDRKMKEQLR.

Belongs to the SmpB family.

It is found in the cytoplasm. Required for rescue of stalled ribosomes mediated by trans-translation. Binds to transfer-messenger RNA (tmRNA), required for stable association of tmRNA with ribosomes. tmRNA and SmpB together mimic tRNA shape, replacing the anticodon stem-loop with SmpB. tmRNA is encoded by the ssrA gene; the 2 termini fold to resemble tRNA(Ala) and it encodes a 'tag peptide', a short internal open reading frame. During trans-translation Ala-aminoacylated tmRNA acts like a tRNA, entering the A-site of stalled ribosomes, displacing the stalled mRNA. The ribosome then switches to translate the ORF on the tmRNA; the nascent peptide is terminated with the 'tag peptide' encoded by the tmRNA and targeted for degradation. The ribosome is freed to recommence translation, which seems to be the essential function of trans-translation. This is SsrA-binding protein from Ruminiclostridium cellulolyticum (strain ATCC 35319 / DSM 5812 / JCM 6584 / H10) (Clostridium cellulolyticum).